A 3065-amino-acid chain; its full sequence is MAX gene-associated protein (3065 aa).

Glycyl lysine isopeptide (Lys-Gly) (interchain with G-Cter in SUMO2) cross-links involve residues Lys4 and Lys178. The segment at residues 84-260 (MWNEFYHRST…YNPFAKGFRD (177 aa)) is a DNA-binding region (T-box). The span at 259–277 (RDDGLNNKPQRDGKQKNSS) shows a compositional bias: basic and acidic residues. The disordered stretch occupies residues 259 to 322 (RDDGLNNKPQ…GHETSGKGLE (64 aa)). Positions 278–289 (DQEGNNISSSSG) are enriched in polar residues. Residues 309 to 322 (PLSRGHETSGKGLE) show a composition bias toward basic and acidic residues. Residues Lys323, Lys329, Lys349, Lys432, Lys460, Lys465, and Lys482 each participate in a glycyl lysine isopeptide (Lys-Gly) (interchain with G-Cter in SUMO2) cross-link. Residue Ser534 is modified to Phosphoserine. A Glycyl lysine isopeptide (Lys-Gly) (interchain with G-Cter in SUMO2) cross-link involves residue Lys570. A disordered region spans residues 604 to 653 (QNASPNVPGKRGRPRKLKLCKAGRPPKNTGKSLISTKNTPVSPGSTFPDV). Ser607 carries the post-translational modification Phosphoserine. Lys613 participates in a covalent cross-link: Glycyl lysine isopeptide (Lys-Gly) (interchain with G-Cter in SUMO2). Over residues 613–624 (KRGRPRKLKLCK) the composition is skewed to basic residues. Polar residues predominate over residues 632 to 648 (TGKSLISTKNTPVSPGS). Phosphoserine is present on Ser645. Residues Lys654, Lys785, Lys791, Lys817, and Lys826 each participate in a glycyl lysine isopeptide (Lys-Gly) (interchain with G-Cter in SUMO2) cross-link. Ser851 carries the post-translational modification Phosphoserine. The segment at 881–911 (STSYSLKPHSVPPVSRKAKSQNRQATFSGRT) is disordered. A compositionally biased stretch (polar residues) spans 901-911 (QNRQATFSGRT). A Phosphoserine modification is found at Ser924. Residue Lys928 forms a Glycyl lysine isopeptide (Lys-Gly) (interchain with G-Cter in SUMO2) linkage. The disordered stretch occupies residues 971–990 (RQAQQQQQQQQGSRPPGLSK). Over residues 972–981 (QAQQQQQQQQ) the composition is skewed to low complexity. Glycyl lysine isopeptide (Lys-Gly) (interchain with G-Cter in SUMO2) cross-links involve residues Lys990, Lys1091, Lys1140, Lys1162, Lys1199, and Lys1207. Positions 1111-1147 (YDTLGEEAREEEEGIREEEEQLKEKKKRKKLEYTICE) form a coiled coil. Residue Ser1208 is modified to Phosphoserine. Disordered stretches follow at residues 1246 to 1332 (RKKE…PGGP) and 1380 to 1429 (RKSR…MEDI). 2 stretches are compositionally biased toward low complexity: residues 1253-1269 (QPSSSSSPSPSFQQQTS) and 1310-1322 (KSSCNEGESSSTS). Phosphoserine occurs at positions 1430 and 1457. Glycyl lysine isopeptide (Lys-Gly) (interchain with G-Cter in SUMO2) cross-links involve residues Lys1461 and Lys1502. Disordered regions lie at residues 1488–1517 (SRKPRTLLPSTSNSKMASSSGTATNRPGKN), 1905–1927 (SPPEPQSFASKTGSETKITYSSG), and 1967–2029 (QMKR…EDRG). Polar residues-rich tracts occupy residues 1495–1514 (LPSTSNSKMASSSGTATNRP) and 1911–1927 (SFASKTGSETKITYSSG). The segment covering 1968 to 1994 (MKRESQNPDQKDETNSIKREQETKKVL) has biased composition (basic and acidic residues). Residues Lys1985 and Lys1992 each participate in a glycyl lysine isopeptide (Lys-Gly) (interchain with G-Cter in SUMO2) cross-link. The segment covering 2008-2023 (IKQNSGAATSEETLND) has biased composition (polar residues). Residues Lys2103, Lys2113, Lys2135, Lys2139, Lys2146, Lys2159, Lys2194, Lys2206, and Lys2238 each participate in a glycyl lysine isopeptide (Lys-Gly) (interchain with G-Cter in SUMO2) cross-link. A disordered region spans residues 2258 to 2316 (RRAAKSSRGNGHFQGHLLLPGEQIQPKQEKKGGRSSADFTVLDLEEDDEDDNEKTDDSI). Position 2265 is an omega-N-methylarginine (Arg2265). Residue Lys2284 forms a Glycyl lysine isopeptide (Lys-Gly) (interchain with G-Cter in SUMO2) linkage. Residues 2300–2316 (DLEEDDEDDNEKTDDSI) show a composition bias toward acidic residues. Glycyl lysine isopeptide (Lys-Gly) (interchain with G-Cter in SUMO2) cross-links involve residues Lys2378, Lys2413, Lys2457, and Lys2532. Residues 2423–2474 (YYRRTHTANERRRRGEMRDLFEKLKITLGLLHSSKVSKSLILTRAFSEIQGL) form the bHLH domain. Ser2541 is subject to Phosphoserine. A Glycyl lysine isopeptide (Lys-Gly) (interchain with G-Cter in SUMO2) cross-link involves residue Lys2546. The interval 2576 to 2595 (KKDQATENTSPLNTPHTSAN) is disordered. Polar residues predominate over residues 2581 to 2595 (TENTSPLNTPHTSAN). Residues Lys2629, Lys2679, Lys2698, and Lys2784 each participate in a glycyl lysine isopeptide (Lys-Gly) (interchain with G-Cter in SUMO2) cross-link. Residues 2668-2709 (GSKYPHEVPDSKPSDHLKDTVRNEDNSLEDKGRISSRGNRDG) form a disordered region. The segment covering 2671–2709 (YPHEVPDSKPSDHLKDTVRNEDNSLEDKGRISSRGNRDG) has biased composition (basic and acidic residues). The stretch at 2817–2841 (DDTDETLTSLLNEIAFLNQQLNDDS) forms a coiled coil. 2 positions are modified to phosphoserine: Ser2910 and Ser2921. Residues 2944–2968 (AIDGGKNTSGLPAEPESVSSPPTLH) form a disordered region. Residue Ser2978 is modified to Phosphoserine. Lys3041 participates in a covalent cross-link: Glycyl lysine isopeptide (Lys-Gly) (interchain with G-Cter in SUMO2).

Interacts with MAX. Requires dimerization with MAX for E-box binding. Component of some MLL1/MLL complex, at least composed of the core components KMT2A/MLL1, ASH2L, HCFC1/HCF1, WDR5 and RBBP5, as well as the facultative components BACC1, CHD8, E2F6, HSP70, INO80C, KANSL1, LAS1L, MAX, MCRS1, MGA, MYST1/MOF, PELP1, PHF20, PRP31, RING2, RUVB1/TIP49A, RUVB2/TIP49B, SENP3, TAF1, TAF4, TAF6, TAF7, TAF9 and TEX10. Interacts with ZMYND11. In terms of tissue distribution, highly expressed in germ cells and granulosa cells.

The protein resides in the nucleus. Its function is as follows. Functions as a dual-specificity transcription factor, regulating the expression of both MAX-network and T-box family target genes. Functions as a repressor or an activator. Binds to 5'-AATTTCACACCTAGGTGTGAAATT-3' core sequence and seems to regulate MYC-MAX target genes. Suppresses transcriptional activation by MYC and inhibits MYC-dependent cell transformation. Function activated by heterodimerization with MAX. This heterodimerization serves the dual function of both generating an E-box-binding heterodimer and simultaneously blocking interaction of a corepressor. This chain is MAX gene-associated protein, found in Homo sapiens (Human).